The sequence spans 188 residues: Elongation factor P (188 aa).

This sequence belongs to the elongation factor P family.

Its subcellular location is the cytoplasm. The protein operates within protein biosynthesis; polypeptide chain elongation. Functionally, involved in peptide bond synthesis. Stimulates efficient translation and peptide-bond synthesis on native or reconstituted 70S ribosomes in vitro. Probably functions indirectly by altering the affinity of the ribosome for aminoacyl-tRNA, thus increasing their reactivity as acceptors for peptidyl transferase. This is Elongation factor P from Malacoplasma penetrans (strain HF-2) (Mycoplasma penetrans).